The chain runs to 88 residues: Meiosis-expressed gene 1 protein (88 aa).

This sequence belongs to the MEIG1 family. In terms of assembly, interacts with PACRG. Interacts with MORN3. Expressed in the testes (at protein level). Expressed in the ovary. Several isoforms have been identified differing in their 5'-untranslated exons. These isoforms show different tissue expression. Some are expressed in various tissues, including lung, liver, brain, testis, oviduct and oocytes. Some are testis-specific.

In terms of biological role, essential for spermiogenesis. The protein is Meiosis-expressed gene 1 protein of Mus musculus (Mouse).